The primary structure comprises 361 residues: Ribosomal RNA small subunit methyltransferase H (361 aa).

S-adenosyl-L-methionine contacts are provided by residues 54-56 (GGH), aspartate 74, tyrosine 101, aspartate 122, and glutamine 129. The disordered stretch occupies residues 318 to 361 (ARNSRASSAKLRAAQRLAEGQAPRPRRRNKYAPEGRDEPEGGAA). A compositionally biased stretch (basic and acidic residues) spans 348-361 (YAPEGRDEPEGGAA).

It belongs to the methyltransferase superfamily. RsmH family.

The protein localises to the cytoplasm. The catalysed reaction is cytidine(1402) in 16S rRNA + S-adenosyl-L-methionine = N(4)-methylcytidine(1402) in 16S rRNA + S-adenosyl-L-homocysteine + H(+). Functionally, specifically methylates the N4 position of cytidine in position 1402 (C1402) of 16S rRNA. The polypeptide is Ribosomal RNA small subunit methyltransferase H (Nitratidesulfovibrio vulgaris (strain DSM 19637 / Miyazaki F) (Desulfovibrio vulgaris)).